The sequence spans 312 residues: Aquaporin Lacbi1:391485 (312 aa).

Residues 1 to 50 (MDDKFDDDALPNSKTTPEDYGDKLAEYDYTNTFPNTWMRLREPFREYIAE) lie on the Cytoplasmic side of the membrane. Residues 51–71 (FVGVAVLIIFGVGADCQVVLS) traverse the membrane as a helical segment. Residues 72 to 89 (ANTGVAPSPKGDYLSLNC) are Extracellular-facing. A helical membrane pass occupies residues 90–110 (GWAIGTAMGVWISGGISGGHI). An NPA 1 motif is present at residues 111–113 (NPA). Over 111 to 128 (NPAVTLALMAWRGFPWWK) the chain is Cytoplasmic. Residues 129–149 (VPGFIFAQLLGGIVGAGLVYV) traverse the membrane as a helical segment. The Extracellular portion of the chain corresponds to 150-183 (NYIHAIDIVEGGRHIRTLDTAGLFATYAADYMTN). An N-linked (GlcNAc...) asparagine glycan is attached at Asn-183. A helical transmembrane segment spans residues 184-204 (VSCFFSEFLATAVLIVVIHAM). Residues 205 to 213 (NDKRNAPPP) lie on the Cytoplasmic side of the membrane. Residues 214–234 (AGLAPLVLFFLILGIGASLGM) traverse the membrane as a helical segment. Residues 235 to 267 (ETGYAINPARDLGPRMLTAMVGYGRQVFAFRNQ) are Extracellular-facing. Positions 241–243 (NPA) match the NPA 2 motif. The helical transmembrane segment at 268–288 (YWIWCPVIAPFLGAQVGTIFY) threads the bilayer. Residues 289-312 (DLFFYKGQDNVFGRLGSHIHISPA) are Cytoplasmic-facing.

This sequence belongs to the MIP/aquaporin (TC 1.A.8) family.

It localises to the membrane. It catalyses the reaction H2O(in) = H2O(out). It carries out the reaction glycerol(in) = glycerol(out). The catalysed reaction is NH4(+)(in) = NH4(+)(out). Functionally, water channel required to facilitate the transport of water across membranes. In addition to water, also shows strong glycerol and ammonium transport activities. May be involved in fungal nitrogen (ammonium) support of the plant host in symbiosis. Glycerol accumulation has never been observed in ectomycorrhizal (ECM) fungi, therefore, glycerol permeability of Lacbi1:391485 might be a relict of the affiliation of the protein to the group of aquaglyceroporins, and other osmotic active compounds (e.g. trehalose or mannitol) may have taken over glycerol function in ECM fungi. This chain is Aquaporin Lacbi1:391485, found in Laccaria bicolor (strain S238N-H82 / ATCC MYA-4686) (Bicoloured deceiver).